Consider the following 206-residue polypeptide: FKBP-type 22 kDa peptidyl-prolyl cis-trans isomerase (206 aa).

A PPIase FKBP-type domain is found at 120 to 206 (TDRVRVHYTG…VFEVELLEIL (87 aa)).

In terms of assembly, homodimer.

It localises to the cytoplasm. It is found in the periplasm. The enzyme catalyses [protein]-peptidylproline (omega=180) = [protein]-peptidylproline (omega=0). Its activity is regulated as follows. Strongly inhibited by FK506. In terms of biological role, PPIases accelerate the folding of proteins. Catalyzes the cis-trans isomerization of proline imidic peptide bonds in oligopeptides. Displays a preference for substrates with a lysyl residue in the P1 position. The chain is FKBP-type 22 kDa peptidyl-prolyl cis-trans isomerase (fklB) from Escherichia coli (strain K12).